The chain runs to 542 residues: Chaperonin GroEL (542 aa).

ATP-binding positions include 29-32, Lys50, 86-90, Gly414, 477-479, and Asp493; these read TMGP, DGTTT, and NAA.

The protein belongs to the chaperonin (HSP60) family. Forms a cylinder of 14 subunits composed of two heptameric rings stacked back-to-back. Interacts with the co-chaperonin GroES.

The protein resides in the cytoplasm. It carries out the reaction ATP + H2O + a folded polypeptide = ADP + phosphate + an unfolded polypeptide.. Functionally, together with its co-chaperonin GroES, plays an essential role in assisting protein folding. The GroEL-GroES system forms a nano-cage that allows encapsulation of the non-native substrate proteins and provides a physical environment optimized to promote and accelerate protein folding. This Sulfurimonas denitrificans (strain ATCC 33889 / DSM 1251) (Thiomicrospira denitrificans (strain ATCC 33889 / DSM 1251)) protein is Chaperonin GroEL.